We begin with the raw amino-acid sequence, 238 residues long: Uridylate kinase (238 aa).

12–15 (KLSG) lines the ATP pocket. Gly-54 is a binding site for UMP. ATP-binding residues include Gly-55 and Arg-59. UMP-binding positions include Asp-74 and 135-142 (TGNPFFTT). Positions 162, 163, 168, and 171 each coordinate ATP.

It belongs to the UMP kinase family. Homohexamer.

Its subcellular location is the cytoplasm. It catalyses the reaction UMP + ATP = UDP + ADP. It participates in pyrimidine metabolism; CTP biosynthesis via de novo pathway; UDP from UMP (UMPK route): step 1/1. With respect to regulation, inhibited by UTP. In terms of biological role, catalyzes the reversible phosphorylation of UMP to UDP. This Rhodopseudomonas palustris (strain BisA53) protein is Uridylate kinase.